The primary structure comprises 270 residues: Endonuclease 4 (270 aa).

9 residues coordinate Zn(2+): His-69, His-108, Glu-139, Asp-169, His-172, His-204, Asp-217, His-219, and Glu-248.

The protein belongs to the AP endonuclease 2 family. Zn(2+) is required as a cofactor.

It carries out the reaction Endonucleolytic cleavage to 5'-phosphooligonucleotide end-products.. Its function is as follows. Endonuclease IV plays a role in DNA repair. It cleaves phosphodiester bonds at apurinic or apyrimidinic (AP) sites, generating a 3'-hydroxyl group and a 5'-terminal sugar phosphate. In addition, possesses a 3'-5' exonuclease activity. This Thermus thermophilus (strain ATCC BAA-163 / DSM 7039 / HB27) protein is Endonuclease 4.